Reading from the N-terminus, the 316-residue chain is Probable cell division protein WhiA (316 aa).

Positions 276 to 309 form a DNA-binding region, H-T-H motif; that stretch reads SLEELGKIAEPQITKDAIAGRIRRLLQLAEKTEK.

The protein belongs to the WhiA family.

Involved in cell division and chromosome segregation. This Bifidobacterium longum (strain NCC 2705) protein is Probable cell division protein WhiA.